The sequence spans 209 residues: Ribonuclease HII (209 aa).

In terms of domain architecture, RNase H type-2 spans Gly-18–Arg-209. Asp-24, Glu-25, and Asp-116 together coordinate a divalent metal cation.

Belongs to the RNase HII family. Mn(2+) serves as cofactor. Requires Mg(2+) as cofactor.

It localises to the cytoplasm. The enzyme catalyses Endonucleolytic cleavage to 5'-phosphomonoester.. In terms of biological role, endonuclease that specifically degrades the RNA of RNA-DNA hybrids. The protein is Ribonuclease HII of Shewanella sp. (strain MR-7).